The sequence spans 163 residues: MSNLNLATLDISEHANLPTSSEVLFKAKADKKLSFESIAAAIGRNEVATAAIFYGQAKASEEDIAKLAQVLEIDHAHLESLLSGFPDRGKSVSFPPKDPLIYRLYEIVQNYGYAYKAVMNEKFGDGIMSAISFSTTVEKETDKDGNNWAVVTWRGKWLPYSRF.

Residues Arg-103, Glu-106, and Ser-129 contribute to the active site.

It belongs to the cyanase family.

It carries out the reaction cyanate + hydrogencarbonate + 3 H(+) = NH4(+) + 2 CO2. Catalyzes the reaction of cyanate with bicarbonate to produce ammonia and carbon dioxide. The protein is Cyanate hydratase of Ajellomyces dermatitidis (strain ER-3 / ATCC MYA-2586) (Blastomyces dermatitidis).